Here is a 121-residue protein sequence, read N- to C-terminus: Ubiquitin-related modifier 1 (121 aa).

At Gly121 the chain carries 1-thioglycine. A Glycyl lysine isopeptide (Gly-Lys) (interchain with K-? in acceptor proteins) cross-link involves residue Gly121.

This sequence belongs to the URM1 family. In terms of processing, C-terminal thiocarboxylation occurs in 2 steps, it is first acyl-adenylated (-COAMP) via the hesA/moeB/thiF part of UBA4, then thiocarboxylated (-COSH) via the rhodanese domain of UBA4.

The protein localises to the cytoplasm. It functions in the pathway tRNA modification; 5-methoxycarbonylmethyl-2-thiouridine-tRNA biosynthesis. Acts as a sulfur carrier required for 2-thiolation of mcm(5)S(2)U at tRNA wobble positions of cytosolic tRNA(Lys), tRNA(Glu) and tRNA(Gln). Serves as sulfur donor in tRNA 2-thiolation reaction by being thiocarboxylated (-COSH) at its C-terminus by the MOCS3 homolog UBA4. The sulfur is then transferred to tRNA to form 2-thiolation of mcm(5)S(2)U. Prior mcm(5) tRNA modification by the elongator complex is required for 2-thiolation. Also acts as a ubiquitin-like protein (UBL) that is covalently conjugated via an isopeptide bond to lysine residues of target proteins such as AHP1. The thiocarboxylated form serves as substrate for conjugation and oxidative stress specifically induces the formation of UBL-protein conjugates. This chain is Ubiquitin-related modifier 1, found in Ajellomyces capsulatus (strain NAm1 / WU24) (Darling's disease fungus).